A 143-amino-acid chain; its full sequence is UPF0225 protein Reut_A0143 (143 aa).

It belongs to the UPF0225 family.

The polypeptide is UPF0225 protein Reut_A0143 (Cupriavidus pinatubonensis (strain JMP 134 / LMG 1197) (Cupriavidus necator (strain JMP 134))).